A 323-amino-acid chain; its full sequence is Arginase, hepatic (323 aa).

Mn(2+)-binding residues include H102, D125, H127, and D129. Substrate contacts are provided by residues 127–131 (HADIN), 138–140 (SGN), and D184. Mn(2+)-binding residues include D233 and D235. Substrate is bound by residues T247 and E278.

This sequence belongs to the arginase family. As to quaternary structure, homotrimer. It depends on Mn(2+) as a cofactor.

The catalysed reaction is L-arginine + H2O = urea + L-ornithine. It participates in nitrogen metabolism; urea cycle; L-ornithine and urea from L-arginine: step 1/1. This chain is Arginase, hepatic, found in Aquarana catesbeiana (American bullfrog).